The following is a 196-amino-acid chain: C-type lectin domain family 3 member A (196 aa).

Positions 1–22 (MAKNGLVLCILVVSLLLDQTDG) are cleaved as a signal peptide. 3 disulfides stabilise this stretch: C68-C78, C95-C191, and C167-C183. The 119-residue stretch at 74–192 (VHKKCYLASE…CRSSKRYICE (119 aa)) folds into the C-type lectin domain.

The protein resides in the secreted. Functionally, promotes cell adhesion to laminin and fibronectin. The sequence is that of C-type lectin domain family 3 member A (Clec3a) from Mus musculus (Mouse).